We begin with the raw amino-acid sequence, 77 residues long: NAD(P)H-quinone oxidoreductase subunit L (77 aa).

2 consecutive transmembrane segments (helical) span residues 12–32 and 47–67; these read LVAYVGIVSIYLLVIPLILFY and LIVYGLVFLFFPGLILFSPFL.

Belongs to the complex I NdhL subunit family. NDH-1 can be composed of about 15 different subunits; different subcomplexes with different compositions have been identified which probably have different functions.

It is found in the cellular thylakoid membrane. It carries out the reaction a plastoquinone + NADH + (n+1) H(+)(in) = a plastoquinol + NAD(+) + n H(+)(out). It catalyses the reaction a plastoquinone + NADPH + (n+1) H(+)(in) = a plastoquinol + NADP(+) + n H(+)(out). NDH-1 shuttles electrons from an unknown electron donor, via FMN and iron-sulfur (Fe-S) centers, to quinones in the respiratory and/or the photosynthetic chain. The immediate electron acceptor for the enzyme in this species is believed to be plastoquinone. Couples the redox reaction to proton translocation, and thus conserves the redox energy in a proton gradient. Cyanobacterial NDH-1 also plays a role in inorganic carbon-concentration. This is NAD(P)H-quinone oxidoreductase subunit L from Prochlorococcus marinus subsp. pastoris (strain CCMP1986 / NIES-2087 / MED4).